The primary structure comprises 319 residues: tRNA uridine(34) hydroxylase (319 aa).

The region spanning 125–219 (LDENTVVIDA…YGKDPEVQGD (95 aa)) is the Rhodanese domain. C179 functions as the Cysteine persulfide intermediate in the catalytic mechanism.

It belongs to the TrhO family.

The catalysed reaction is uridine(34) in tRNA + AH2 + O2 = 5-hydroxyuridine(34) in tRNA + A + H2O. Its function is as follows. Catalyzes oxygen-dependent 5-hydroxyuridine (ho5U) modification at position 34 in tRNAs. The sequence is that of tRNA uridine(34) hydroxylase from Lactococcus lactis subsp. lactis (strain IL1403) (Streptococcus lactis).